Consider the following 155-residue polypeptide: MSRRGTAEEKTAKSDPIYRNRLVNMLVNRIMKHGKKSLAYQIIYRAVKKIQQKTETNPLSVLRQAIRGVTPDIAVKARRVGGSTHQVPIEIGSTQGKALAIRWLLGASRKRPGRNMAFKLSSELVDAAKGSGDAIRKKEETHRMAEANRAFAHFR.

This sequence belongs to the universal ribosomal protein uS7 family. In terms of assembly, part of the 30S ribosomal subunit.

It is found in the plastid. The protein localises to the chloroplast. Functionally, one of the primary rRNA binding proteins, it binds directly to 16S rRNA where it nucleates assembly of the head domain of the 30S subunit. In Typha angustifolia (Narrow leaf cattail), this protein is Small ribosomal subunit protein uS7c (rps7).